Here is a 641-residue protein sequence, read N- to C-terminus: UPF0329 protein ECU11_0030 (641 aa).

Positions 358–387 (RQRKREEETERSVKELVGDEEKAKSKEEKA) are enriched in basic and acidic residues. The disordered stretch occupies residues 358 to 444 (RQRKREEETE…KGGKKKSKGG (87 aa)). The segment covering 435–444 (KGGKKKSKGG) has biased composition (basic residues).

This sequence belongs to the UPF0329 family.

This chain is UPF0329 protein ECU11_0030, found in Encephalitozoon cuniculi (strain GB-M1) (Microsporidian parasite).